The primary structure comprises 87 residues: MANIKSAKKRAVQSEKARKHNASRRSMMRTFIKKVYAAIEAGDKAAAQNAFNEMQPIVDRQAAKGLIHKNKAARHKANLTAQISKLA.

The segment at 1–26 is disordered; that stretch reads MANIKSAKKRAVQSEKARKHNASRRS.

It belongs to the bacterial ribosomal protein bS20 family.

Its function is as follows. Binds directly to 16S ribosomal RNA. In Enterobacter sp. (strain 638), this protein is Small ribosomal subunit protein bS20.